A 201-amino-acid chain; its full sequence is Holliday junction resolvase RecU (201 aa).

Residues Thr-85, Asp-87, Asp-100, and Gln-119 each coordinate Mg(2+).

It belongs to the RecU family. The cofactor is Mg(2+).

The protein resides in the cytoplasm. The catalysed reaction is Endonucleolytic cleavage at a junction such as a reciprocal single-stranded crossover between two homologous DNA duplexes (Holliday junction).. In terms of biological role, endonuclease that resolves Holliday junction intermediates in genetic recombination. Cleaves mobile four-strand junctions by introducing symmetrical nicks in paired strands. Promotes annealing of linear ssDNA with homologous dsDNA. Required for DNA repair, homologous recombination and chromosome segregation. The protein is Holliday junction resolvase RecU of Pediococcus pentosaceus (strain ATCC 25745 / CCUG 21536 / LMG 10740 / 183-1w).